A 432-amino-acid polypeptide reads, in one-letter code: Adenylosuccinate synthetase (432 aa).

Residues 13–19 and 41–43 contribute to the GTP site; these read GDEGKGK and GHT. The Proton acceptor role is filled by Asp-14. Residues Asp-14 and Gly-41 each contribute to the Mg(2+) site. Residues 14–17, 39–42, Thr-130, Arg-144, Gln-225, Thr-240, and Arg-304 contribute to the IMP site; these read DEGK and NAGH. His-42 acts as the Proton donor in catalysis. A substrate-binding site is contributed by 300–306; that stretch reads ATTGRKR. GTP contacts are provided by residues Arg-306, 332–334, and 415–417; these read KLD and STG.

The protein belongs to the adenylosuccinate synthetase family. Homodimer. Mg(2+) serves as cofactor.

The protein resides in the cytoplasm. It catalyses the reaction IMP + L-aspartate + GTP = N(6)-(1,2-dicarboxyethyl)-AMP + GDP + phosphate + 2 H(+). It participates in purine metabolism; AMP biosynthesis via de novo pathway; AMP from IMP: step 1/2. In terms of biological role, plays an important role in the de novo pathway of purine nucleotide biosynthesis. Catalyzes the first committed step in the biosynthesis of AMP from IMP. This chain is Adenylosuccinate synthetase, found in Photobacterium profundum (strain SS9).